The following is a 793-amino-acid chain: Endonuclease MutS2 (793 aa).

335–342 contributes to the ATP binding site; sequence GPNTGGKT. Residues 718-793 form the Smr domain; that stretch reads IDVRGYNLEE…ESGVTIVELR (76 aa).

This sequence belongs to the DNA mismatch repair MutS family. MutS2 subfamily. In terms of assembly, homodimer. Binds to stalled ribosomes, contacting rRNA.

Its function is as follows. Endonuclease that is involved in the suppression of homologous recombination and thus may have a key role in the control of bacterial genetic diversity. Functionally, acts as a ribosome collision sensor, splitting the ribosome into its 2 subunits. Detects stalled/collided 70S ribosomes which it binds and splits by an ATP-hydrolysis driven conformational change. Acts upstream of the ribosome quality control system (RQC), a ribosome-associated complex that mediates the extraction of incompletely synthesized nascent chains from stalled ribosomes and their subsequent degradation. Probably generates substrates for RQC. The sequence is that of Endonuclease MutS2 from Acetivibrio thermocellus (strain ATCC 27405 / DSM 1237 / JCM 9322 / NBRC 103400 / NCIMB 10682 / NRRL B-4536 / VPI 7372) (Clostridium thermocellum).